The following is a 277-amino-acid chain: RsbT co-antagonist protein RsbRB (277 aa).

One can recognise an STAS domain in the interval 165-276 (SSPVITLSKS…TNLAQALNYH (112 aa)). Phosphothreonine is present on threonine 186.

In terms of assembly, interacts with RsbRA and RsbS in the stressosome. The stressosome probably also contains RsbRC and RsbRD. Phosphorylated by RsbT.

Its function is as follows. One of 4 functionally non-identical RsbR paralogs, it functions in the environmental signaling branch of the general stress response. Negative regulator of sigma-B activity. Non-phosphorylated RsbS binds to RsbT, preventing its association with RsbU. Requires any one of RsbRA, RsbRB, RsbRC or RsbRD to sequester RsbT. When RsbS and the RsbR paralog(s) are phosphorylated, they release RsbT, which can then bind and activate RsbU. In Bacillus subtilis (strain 168), this protein is RsbT co-antagonist protein RsbRB (rsbRB).